Consider the following 474-residue polypeptide: Glutathione synthetase (474 aa).

Arg-125 is a binding site for substrate. Position 144 (Glu-144) interacts with ATP. The Mg(2+) site is built by Glu-144 and Asn-146. Substrate-binding positions include Ile-148–Ser-151, Gln-214–Asn-216, Gln-220, and Arg-267–Tyr-270. ATP contacts are provided by residues Lys-305, Lys-364–Asn-373, Tyr-375, Met-398–Ile-401, and Glu-425. Glu-368 is a Mg(2+) binding site. Arg-450 is a substrate binding site. ATP-binding residues include Lys-452 and Asp-458. Val-461–Ala-462 lines the substrate pocket.

The protein belongs to the eukaryotic GSH synthase family. Homodimer. Mg(2+) serves as cofactor. In terms of tissue distribution, expressed ubiquitously.

It carries out the reaction gamma-L-glutamyl-L-cysteine + glycine + ATP = glutathione + ADP + phosphate + H(+). The enzyme catalyses gamma-L-glutamyl-(2S)-2-aminobutanoate + glycine + ATP = ophthalmate + ADP + phosphate + H(+). The protein operates within sulfur metabolism; glutathione biosynthesis; glutathione from L-cysteine and L-glutamate: step 2/2. Functionally, catalyzes the production of glutathione from gamma-glutamylcysteine and glycine in an ATP-dependent manner. Glutathione (gamma-glutamylcysteinylglycine, GSH) is the most abundant intracellular thiol in living aerobic cells and is required for numerous processes including the protection of cells against oxidative damage, amino acid transport, the detoxification of foreign compounds, the maintenance of protein sulfhydryl groups in a reduced state and acts as a cofactor for a number of enzymes. Participates in ophthalmate biosynthesis in hepatocytes. This is Glutathione synthetase from Xenopus laevis (African clawed frog).